Reading from the N-terminus, the 309-residue chain is 2-oxoacid:ferredoxin oxidoreductase 2, subunit beta (309 aa).

Residues cysteine 17, cysteine 20, and cysteine 51 each coordinate [4Fe-4S] cluster. Thiamine diphosphate contacts are provided by residues 49–52 (IGCS) and histidine 68. Aspartate 93 serves as a coordination point for Mg(2+). 94–95 (GD) serves as a coordination point for thiamine diphosphate. Mg(2+) is bound by residues asparagine 121 and valine 123. Residue 125-126 (GL) participates in thiamine diphosphate binding. A [4Fe-4S] cluster-binding site is contributed by cysteine 200.

In terms of assembly, heterodimer composed of an alpha and a beta subunit. The cofactor is [4Fe-4S] cluster. It depends on thiamine diphosphate as a cofactor. Requires Mg(2+) as cofactor.

It carries out the reaction a 2-oxocarboxylate + 2 oxidized [2Fe-2S]-[ferredoxin] + CoA = an acyl-CoA + 2 reduced [2Fe-2S]-[ferredoxin] + CO2 + H(+). Catalyzes the coenzyme A-dependent oxidative decarboxylation of different 2-oxoacids such as pyruvate, 2-oxobutyrate, glyoxylate and 2-oxoglutarate to form their CoA derivatives. In Aeropyrum pernix (strain ATCC 700893 / DSM 11879 / JCM 9820 / NBRC 100138 / K1), this protein is 2-oxoacid:ferredoxin oxidoreductase 2, subunit beta.